The following is an 82-amino-acid chain: Small ribosomal subunit protein bS16 (82 aa).

It belongs to the bacterial ribosomal protein bS16 family.

In Elusimicrobium minutum (strain Pei191), this protein is Small ribosomal subunit protein bS16.